Here is a 63-residue protein sequence, read N- to C-terminus: Large ribosomal subunit protein bL28 (63 aa).

It belongs to the bacterial ribosomal protein bL28 family.

The protein is Large ribosomal subunit protein bL28 of Pelobacter propionicus (strain DSM 2379 / NBRC 103807 / OttBd1).